Here is a 109-residue protein sequence, read N- to C-terminus: Large ribosomal subunit protein uL24 (109 aa).

It belongs to the universal ribosomal protein uL24 family. Part of the 50S ribosomal subunit.

One of two assembly initiator proteins, it binds directly to the 5'-end of the 23S rRNA, where it nucleates assembly of the 50S subunit. Functionally, one of the proteins that surrounds the polypeptide exit tunnel on the outside of the subunit. This is Large ribosomal subunit protein uL24 from Rickettsia rickettsii (strain Iowa).